The following is a 378-amino-acid chain: Chaperone protein DnaJ (378 aa).

In terms of domain architecture, J spans Asp5–Gly70. The CR-type zinc-finger motif lies at Gly133–Ser211. Zn(2+) is bound by residues Cys146, Cys149, Cys163, Cys166, Cys185, Cys188, Cys199, and Cys202. 4 CXXCXGXG motif repeats span residues Cys146–Gly153, Cys163–Gly170, Cys185–Gly192, and Cys199–Gly206.

The protein belongs to the DnaJ family. Homodimer. Zn(2+) is required as a cofactor.

Its subcellular location is the cytoplasm. In terms of biological role, participates actively in the response to hyperosmotic and heat shock by preventing the aggregation of stress-denatured proteins and by disaggregating proteins, also in an autonomous, DnaK-independent fashion. Unfolded proteins bind initially to DnaJ; upon interaction with the DnaJ-bound protein, DnaK hydrolyzes its bound ATP, resulting in the formation of a stable complex. GrpE releases ADP from DnaK; ATP binding to DnaK triggers the release of the substrate protein, thus completing the reaction cycle. Several rounds of ATP-dependent interactions between DnaJ, DnaK and GrpE are required for fully efficient folding. Also involved, together with DnaK and GrpE, in the DNA replication of plasmids through activation of initiation proteins. In Pectobacterium carotovorum subsp. carotovorum (strain PC1), this protein is Chaperone protein DnaJ.